We begin with the raw amino-acid sequence, 608 residues long: Serine/threonine-protein kinase BUR1 (608 aa).

Residues 39–346 enclose the Protein kinase domain; that stretch reads YEIIQKLGQG…ALDALNHNYF (308 aa). ATP contacts are provided by residues 45–53 and Lys-68; that span reads LGQGTFGVV. Asp-174 acts as the Proton acceptor in catalysis. Disordered stretches follow at residues 383–419 and 443–571; these read HEAN…LALP and YIPK…FDED. The segment covering 400-411 has biased composition (low complexity); sequence YNNSNNYPRNRN. Residues 471–482 are compositionally biased toward basic and acidic residues; the sequence is LRDRSPRREGHI. Low complexity predominate over residues 487–502; that stretch reads STTNSNNISSNSSASN. Composition is skewed to polar residues over residues 503–512 and 539–548; these read VGGTLSNPTH and PQSSSRNVSD. The segment covering 559-571 has biased composition (acidic residues); it reads EQNESDLTDFDED.

Belongs to the protein kinase superfamily. CMGC Ser/Thr protein kinase family. CDC2/CDKX subfamily.

It localises to the nucleus. It carries out the reaction L-seryl-[protein] + ATP = O-phospho-L-seryl-[protein] + ADP + H(+). The enzyme catalyses L-threonyl-[protein] + ATP = O-phospho-L-threonyl-[protein] + ADP + H(+). The catalysed reaction is [DNA-directed RNA polymerase] + ATP = phospho-[DNA-directed RNA polymerase] + ADP + H(+). Serine/threonine-protein kinase involved in transcription regulation. Phosphorylates the UBC2/RAD6 ubiquitin-conjugating enzyme (E2), leading to monoubiquitination of histone H2B and the silencing of telomeric-associated genes. Also required for histone H3 methylation. Necessary for the recovery from pheromone-induced growth arrest in the cell cycle G1 phase. This Debaryomyces hansenii (strain ATCC 36239 / CBS 767 / BCRC 21394 / JCM 1990 / NBRC 0083 / IGC 2968) (Yeast) protein is Serine/threonine-protein kinase BUR1 (BUR1).